The sequence spans 317 residues: uncharacterized protein (317 aa).

Helical transmembrane passes span 14 to 34 (IPLLSNDLISMLSGGVAATVS), 72 to 92 (LIGFFRGNGTNCLRAFPYGAV), 119 to 139 (LLFGAIAGAASCATTYPLDIA), 196 to 216 (TLLNVVPYVSICFFTFEFCKQ), 230 to 250 (LFLGGFTGIIGQTLTFPADVL), and 291 to 307 (SNMLKIIPVMSITWYTY). Solcar repeat units follow at residues 18 to 103 (SNDL…LKQR), 113 to 217 (LENH…CKQK), and 224 to 313 (LTAF…VSKM).

It belongs to the mitochondrial carrier (TC 2.A.29) family.

It localises to the mitochondrion inner membrane. This is an uncharacterized protein from Schizosaccharomyces pombe (strain 972 / ATCC 24843) (Fission yeast).